The sequence spans 151 residues: 6,7-dimethyl-8-ribityllumazine synthase (151 aa).

5-amino-6-(D-ribitylamino)uracil contacts are provided by residues Phe-18, 49 to 51 (ALE), and 74 to 76 (CVI). 79–80 (ET) contributes to the (2S)-2-hydroxy-3-oxobutyl phosphate binding site. His-82 functions as the Proton donor in the catalytic mechanism. Asn-107 provides a ligand contact to 5-amino-6-(D-ribitylamino)uracil. Arg-121 serves as a coordination point for (2S)-2-hydroxy-3-oxobutyl phosphate.

It belongs to the DMRL synthase family.

It catalyses the reaction (2S)-2-hydroxy-3-oxobutyl phosphate + 5-amino-6-(D-ribitylamino)uracil = 6,7-dimethyl-8-(1-D-ribityl)lumazine + phosphate + 2 H2O + H(+). It participates in cofactor biosynthesis; riboflavin biosynthesis; riboflavin from 2-hydroxy-3-oxobutyl phosphate and 5-amino-6-(D-ribitylamino)uracil: step 1/2. Functionally, catalyzes the formation of 6,7-dimethyl-8-ribityllumazine by condensation of 5-amino-6-(D-ribitylamino)uracil with 3,4-dihydroxy-2-butanone 4-phosphate. This is the penultimate step in the biosynthesis of riboflavin. This Bartonella tribocorum (strain CIP 105476 / IBS 506) protein is 6,7-dimethyl-8-ribityllumazine synthase.